The following is a 193-amino-acid chain: ATP-dependent Clp protease proteolytic subunit 2 (193 aa).

Serine 98 functions as the Nucleophile in the catalytic mechanism. The active site involves histidine 123.

This sequence belongs to the peptidase S14 family. As to quaternary structure, fourteen ClpP subunits assemble into 2 heptameric rings which stack back to back to give a disk-like structure with a central cavity, resembling the structure of eukaryotic proteasomes.

The protein localises to the cytoplasm. The catalysed reaction is Hydrolysis of proteins to small peptides in the presence of ATP and magnesium. alpha-casein is the usual test substrate. In the absence of ATP, only oligopeptides shorter than five residues are hydrolyzed (such as succinyl-Leu-Tyr-|-NHMec, and Leu-Tyr-Leu-|-Tyr-Trp, in which cleavage of the -Tyr-|-Leu- and -Tyr-|-Trp bonds also occurs).. Cleaves peptides in various proteins in a process that requires ATP hydrolysis. Has a chymotrypsin-like activity. Plays a major role in the degradation of misfolded proteins. This Bacillus cereus (strain ATCC 14579 / DSM 31 / CCUG 7414 / JCM 2152 / NBRC 15305 / NCIMB 9373 / NCTC 2599 / NRRL B-3711) protein is ATP-dependent Clp protease proteolytic subunit 2.